A 717-amino-acid chain; its full sequence is Aryl hydrocarbon receptor nuclear translocator 2 (717 aa).

Disordered regions lie at residues 1–20 (MATPAAVNPPEMASDIPGSV) and 35–74 (MAGAMPARGGKRRSGMDFDDEDGEGPSKFSRENHSEIERR). Arg-42 is subject to Omega-N-methylarginine. The span at 63–73 (FSRENHSEIER) shows a compositional bias: basic and acidic residues. The bHLH domain maps to 63–116 (FSRENHSEIERRRRNKMTQYITELSDMVPTCSALARKPDKLTILRMAVSHMKSM). PAS domains follow at residues 134-209 (TEQE…MTGR) and 323-393 (PVCM…VKLK). A PAC domain is found at 398–441 (SVMYRFRTKNREWMLIRTSSFTFQNPYSDEIEYIICTNTNVKQL). The tract at residues 548–717 (NDIQSSSSTG…DLGMFPPFSE (170 aa)) is disordered. Composition is skewed to polar residues over residues 549-574 (DIQSSSSTGQNMSQISRQLNQSQVAW) and 585-605 (QIPSQSSKTQSSPFGIGTSHT). Positions 610–625 (PSSYSPLSSPATSSPS) are enriched in low complexity. Residues 642 to 651 (SGQSSGQFQG) show a composition bias toward polar residues. Low complexity predominate over residues 658–680 (SQWQSQHHGQQSGEQHSHQQPGQ).

Efficient DNA binding requires dimerization with another bHLH protein. Heterodimer with NPAS4. Heterodimer with SIM1. Heterodimer with the aryl hydrocarbon receptor (AHR) or the SIM1 protein. Interacts with TACC3.

Its subcellular location is the nucleus. Functionally, transcription factor that plays a role in the development of the hypothalamo-pituitary axis, postnatal brain growth, and visual and renal function. Specifically recognizes the xenobiotic response element (XRE). The chain is Aryl hydrocarbon receptor nuclear translocator 2 (ARNT2) from Homo sapiens (Human).